The chain runs to 723 residues: Nicastrin (723 aa).

Positions 1–16 (MKKWLVIVLIIAGIRC) are cleaved as a signal peptide. The Extracellular segment spans residues 17 to 678 (DGFSDQVFRT…ESVNLYLMED (662 aa)). N-linked (GlcNAc...) asparagine glycosylation is found at Asn40, Asn181, Asn271, Asn328, Asn409, and Asn627. A helical membrane pass occupies residues 679–699 (ASFEYTMILIAVISALLSIFA). At 700–723 (VGRCSETTFIVDEGEPAAEGGEPL) the chain is on the cytoplasmic side.

Belongs to the nicastrin family. As to quaternary structure, component of the gamma-secretase complex, a complex probably composed of the presenilin homodimer (sel-12, hop-1 or spe-4), nicastrin (aph-2), aph-1 and pen-2.

The protein resides in the membrane. In terms of biological role, essential subunit of the gamma-secretase complex, an endoprotease complex that catalyzes the intramembrane cleavage of integral membrane proteins such as Notch (glp-1 or lin-12). It may represents a stabilizing cofactor required for the assembly of the gamma-secretase complex. This chain is Nicastrin (aph-2), found in Caenorhabditis elegans.